The sequence spans 285 residues: Nucleotide-binding protein FMG_1084 (285 aa).

8 to 15 contributes to the ATP binding site; that stretch reads GMSGAGKS. Residue 59–62 participates in GTP binding; the sequence is DIRG.

It belongs to the RapZ-like family.

Displays ATPase and GTPase activities. The sequence is that of Nucleotide-binding protein FMG_1084 from Finegoldia magna (strain ATCC 29328 / DSM 20472 / WAL 2508) (Peptostreptococcus magnus).